Consider the following 429-residue polypeptide: Glutamate-1-semialdehyde 2,1-aminomutase 2 (429 aa).

An N6-(pyridoxal phosphate)lysine modification is found at lysine 268.

The protein belongs to the class-III pyridoxal-phosphate-dependent aminotransferase family. HemL subfamily. In terms of assembly, homodimer. Pyridoxal 5'-phosphate serves as cofactor.

It localises to the cytoplasm. It carries out the reaction (S)-4-amino-5-oxopentanoate = 5-aminolevulinate. The protein operates within porphyrin-containing compound metabolism; protoporphyrin-IX biosynthesis; 5-aminolevulinate from L-glutamyl-tRNA(Glu): step 2/2. This chain is Glutamate-1-semialdehyde 2,1-aminomutase 2, found in Bacillus velezensis (strain DSM 23117 / BGSC 10A6 / LMG 26770 / FZB42) (Bacillus amyloliquefaciens subsp. plantarum).